A 125-amino-acid chain; its full sequence is Large ribosomal subunit protein bL12 (125 aa).

The protein belongs to the bacterial ribosomal protein bL12 family. As to quaternary structure, homodimer. Part of the ribosomal stalk of the 50S ribosomal subunit. Forms a multimeric L10(L12)X complex, where L10 forms an elongated spine to which 2 to 4 L12 dimers bind in a sequential fashion. Binds GTP-bound translation factors.

In terms of biological role, forms part of the ribosomal stalk which helps the ribosome interact with GTP-bound translation factors. Is thus essential for accurate translation. This Paraburkholderia phymatum (strain DSM 17167 / CIP 108236 / LMG 21445 / STM815) (Burkholderia phymatum) protein is Large ribosomal subunit protein bL12.